The chain runs to 358 residues: NAC domain-containing protein 12 (358 aa).

The NAC domain maps to 16-177; that stretch reads VPPGFRFHPT…GWVVCRVFRK (162 aa). A DNA-binding region spans residues 116–183; the sequence is IGLRKTLVFY…VFRKKNYQKI (68 aa).

In terms of tissue distribution, stems and roots, specifically in interfascicular fibers (sclerenchyma), cells differentiating into vascular vessels (cambium), and xylem.

The protein localises to the nucleus. Transcriptional activator of genes involved in biosynthesis of secondary walls. Together with NST1, required for the secondary cell wall thickening and lignification of sclerenchymatous fibers and secondary xylem vessels (tracheary elements). Seems to repress the secondary cell wall thickening of xylary fibers. May also regulate the secondary cell wall lignification of other tissues. Binds to and activates the promoter of MYB46. The protein is NAC domain-containing protein 12 of Arabidopsis thaliana (Mouse-ear cress).